The primary structure comprises 104 residues: Cuticle protein 67, isoform B (104 aa).

7 repeat units span residues 7 to 10, 14 to 17, 21 to 24, 28 to 31, 85 to 88, 92 to 95, and 98 to 101.

Its function is as follows. Component of the cuticle of migratory locust which contains more than 100 different structural proteins. The sequence is that of Cuticle protein 67, isoform B from Locusta migratoria (Migratory locust).